The following is a 681-amino-acid chain: uncharacterized protein (681 aa).

It belongs to the protein kinase superfamily. ADCK protein kinase family.

This is an uncharacterized protein from Synechocystis sp. (strain ATCC 27184 / PCC 6803 / Kazusa).